Here is a 92-residue protein sequence, read N- to C-terminus: MGRSLKKGPFVDEHLMKKVEAQANDEKKKVIKTWSRRSTIFPSFIGYTIAVYDGRKHVPVYIQEDMVGHKLGEFAPTRTYKGHAADDKKTRR.

The protein belongs to the universal ribosomal protein uS19 family.

In terms of biological role, protein S19 forms a complex with S13 that binds strongly to the 16S ribosomal RNA. This chain is Small ribosomal subunit protein uS19, found in Streptococcus agalactiae serotype Ia (strain ATCC 27591 / A909 / CDC SS700).